A 106-amino-acid polypeptide reads, in one-letter code: Large ribosomal subunit protein bL21 (106 aa).

This sequence belongs to the bacterial ribosomal protein bL21 family. As to quaternary structure, part of the 50S ribosomal subunit. Contacts protein L20.

This protein binds to 23S rRNA in the presence of protein L20. The chain is Large ribosomal subunit protein bL21 from Xanthomonas oryzae pv. oryzae (strain MAFF 311018).